Here is a 463-residue protein sequence, read N- to C-terminus: Glutamyl-tRNA(Gln) amidotransferase subunit A, mitochondrial (463 aa).

Catalysis depends on charge relay system residues Lys-47 and Ser-124. Catalysis depends on Ser-148, which acts as the Acyl-ester intermediate.

This sequence belongs to the amidase family. GatA subfamily. In terms of assembly, subunit of the heterotrimeric GatFAB amidotransferase (AdT) complex, composed of A, B and F subunits.

It is found in the mitochondrion. It catalyses the reaction L-glutamyl-tRNA(Gln) + L-glutamine + ATP + H2O = L-glutaminyl-tRNA(Gln) + L-glutamate + ADP + phosphate + H(+). In terms of biological role, allows the formation of correctly charged Gln-tRNA(Gln) through the transamidation of misacylated Glu-tRNA(Gln) in the mitochondria. The reaction takes place in the presence of glutamine and ATP through an activated gamma-phospho-Glu-tRNA(Gln). This Eremothecium gossypii (strain ATCC 10895 / CBS 109.51 / FGSC 9923 / NRRL Y-1056) (Yeast) protein is Glutamyl-tRNA(Gln) amidotransferase subunit A, mitochondrial.